A 536-amino-acid polypeptide reads, in one-letter code: E3 ubiquitin-protein ligase Godzilla (536 aa).

Residues 1–21 form the signal peptide; it reads MSKRSCQILTLLGLCLVCHEA. At 22–174 the chain is on the extracellular side; sequence TLVGGHVLVY…DELPFNINTQ (153 aa). Residues 89 to 151 enclose the PA domain; the sequence is FVALVARGEC…FVGHTTGKAL (63 aa). Residues asparagine 109 and asparagine 132 are each glycosylated (N-linked (GlcNAc...) asparagine). Residues 175–195 form a helical membrane-spanning segment; that stretch reads LILPFSILIGMCFIIMVIYMI. Residues 196–536 are Cytoplasmic-facing; it reads YKCIREQRRL…HSASDRQFLI (341 aa). An RING-type; atypical zinc finger spans residues 235 to 277; the sequence is CVICLEDFIEDDKLRVLPCSHPYHTHCIDPWLTENRRVCPICK. Disordered regions lie at residues 287 to 334 and 350 to 372; these read RASR…GAAG and HGTF…SDDE. The segment covering 307-334 has biased composition (low complexity); that stretch reads TPLLQQQQSNGRQVGQVSSASSAGGAAG.

The protein belongs to the Godzilla family.

The protein localises to the endosome membrane. It catalyses the reaction S-ubiquitinyl-[E2 ubiquitin-conjugating enzyme]-L-cysteine + [acceptor protein]-L-lysine = [E2 ubiquitin-conjugating enzyme]-L-cysteine + N(6)-ubiquitinyl-[acceptor protein]-L-lysine.. The protein operates within protein modification; protein ubiquitination. In terms of biological role, endosomal E3 ubiquitin-protein ligase that regulates the recycling endosome pathway by mediating ubiquitination of Synaptobrevin (Syb). Also acts as a regulator of transcytosis in wing imaginal disks by catalyzing ubiquitination of Syb: ubiquitination of Syb promotes transcytosis of wingless (wg) to the basolateral surface. In Drosophila melanogaster (Fruit fly), this protein is E3 ubiquitin-protein ligase Godzilla.